The following is a 427-amino-acid chain: GTPase Obg (427 aa).

Positions 1-158 (MFIDKAKIHL…LTVTLELKLI (158 aa)) constitute an Obg domain. An OBG-type G domain is found at 159 to 330 (ADVGLVGFPN…LLDYVSIKLK (172 aa)). Residues 165 to 172 (GFPNVGKS), 190 to 194 (FTTLT), 212 to 215 (DIPG), 282 to 285 (NKTD), and 311 to 313 (SAA) contribute to the GTP site. Residues Ser172 and Thr192 each coordinate Mg(2+). The OCT domain maps to 347–427 (LYELKEKDTN…IYDVEFEYFH (81 aa)).

The protein belongs to the TRAFAC class OBG-HflX-like GTPase superfamily. OBG GTPase family. In terms of assembly, monomer. It depends on Mg(2+) as a cofactor.

The protein resides in the cytoplasm. In terms of biological role, an essential GTPase which binds GTP, GDP and possibly (p)ppGpp with moderate affinity, with high nucleotide exchange rates and a fairly low GTP hydrolysis rate. Plays a role in control of the cell cycle, stress response, ribosome biogenesis and in those bacteria that undergo differentiation, in morphogenesis control. The protein is GTPase Obg of Alkaliphilus metalliredigens (strain QYMF).